A 250-amino-acid polypeptide reads, in one-letter code: Ferritin-2, chloroplastic (250 aa).

A chloroplast-targeting transit peptide spans 1 to 43 (MLLRTAAASSLSLFNPNAEPSRSVPVLANNASRLVVRAAKGST). Positions 44–76 (NHRALTGVIFEPFEEVKKELDLVPTVPQASLAR) are extension peptide (EP). The 154-residue stretch at 77 to 230 (QKYVDESEAA…EYVAQLRRVG (154 aa)) folds into the Ferritin-like diiron domain. The Fe cation site is built by Glu94, Glu129, His132, Glu178, and Gln212.

The protein belongs to the ferritin family. As to quaternary structure, oligomer of 24 subunits. There are two types of subunits: L (light) chain and H (heavy) chain. The major chain can be light or heavy, depending on the species and tissue type. The functional molecule forms a roughly spherical shell with a diameter of 12 nm and contains a central cavity into which the insoluble mineral iron core is deposited.

The protein resides in the plastid. It localises to the chloroplast. It carries out the reaction 4 Fe(2+) + O2 + 4 H(+) = 4 Fe(3+) + 2 H2O. Stores iron in a soluble, non-toxic, readily available form. Important for iron homeostasis. Has ferroxidase activity. Iron is taken up in the ferrous form and deposited as ferric hydroxides after oxidation. This Vigna unguiculata (Cowpea) protein is Ferritin-2, chloroplastic (PFE2).